The sequence spans 254 residues: PAXIP1-associated glutamate-rich protein 1 (254 aa).

Disordered regions lie at residues 1–111 and 127–254; these read MSLA…PPSE and LQAE…QRKY. Basic and acidic residues predominate over residues 45–62; sequence KAEDEGEGGREETEREGS. Residues 78–98 are compositionally biased toward acidic residues; that stretch reads EPAEEDSEDWCVPCSDEEVEL. Residues 116–160 are sufficient for interaction with NCOA1; that stretch reads YELLAAHGTLELQAEILPRRPPTPEAQSEEERSDEEPEAKEEEEE. T138 is subject to Phosphothreonine. Residues 142–159 are compositionally biased toward acidic residues; it reads QSEEERSDEEPEAKEEEE. Residues S143 and S148 each carry the phosphoserine modification. A sufficient for interaction with ESR1 region spans residues 161-254; that stretch reads KPHMPTEFDF…SSLFPRQRKY (94 aa). A compositionally biased stretch (basic and acidic residues) spans 195–223; sequence QKREARLDKVLSDMKRHKKLEEQILRTGR. A Phosphoserine modification is found at S237.

In terms of assembly, component of the KMT2 family MLL2/MLL3 complex (also named ASCOM complex), at least composed of the HMTs KMT2D and/or KMT2C, the common subunits ASH2L, RBBP5, WDR5 and DPY30, and the complex type-specific subunits PAXIP1/PTIP, PAGR1, NCOA6 and KDM6A; PAXIP1 is required for the association with the MLL2/MLL3 complex. Forms a constitutive complex with PAXIP1/PTIP independently of the MLL2/MLL3 complex. Interacts with NCOA1, ESR1, NR3C1, AR. In terms of tissue distribution, ubiquitously expressed.

The protein localises to the nucleus. Its function is as follows. Its association with the histone methyltransferase MLL2/MLL3 complex is suggesting a role in epigenetic transcriptional activation. However, in association with PAXIP1/PTIP is proposed to function at least in part independently of the MLL2/MLL3 complex. Proposed to be recruited by PAXIP1 to sites of DNA damage where the PAGR1:PAXIP1 complex is required for cell survival in response to DNA damage independently of the MLL2/MLL3 complex. However, its function in DNA damage has been questioned. During immunoglobulin class switching in activated B-cells is involved in transcription regulation of downstream switch regions at the immunoglobulin heavy-chain (Igh) locus independently of the MLL2/MLL3 complex. Involved in both estrogen receptor-regulated gene transcription and estrogen-stimulated G1/S cell-cycle transition. Acts as a transcriptional cofactor for nuclear hormone receptors. Inhibits the induction properties of several steroid receptors such as NR3C1, AR and PPARG; the mechanism of inhibition appears to be gene-dependent. In Homo sapiens (Human), this protein is PAXIP1-associated glutamate-rich protein 1 (PAGR1).